A 117-amino-acid chain; its full sequence is Immunoglobulin heavy variable 1-46 (117 aa).

The N-terminal stretch at 1 to 19 is a signal peptide; sequence MDWTWRVFCLLAVAPGAHS. The framework-1 stretch occupies residues 20-44; sequence QVQLVQSGAEVKKPGASVKVSCKAS. Residues 20–117 form the Ig-like domain; that stretch reads QVQLVQSGAE…EDTAVYYCAR (98 aa). Residues cysteine 41 and cysteine 115 are joined by a disulfide bond. The tract at residues 45–52 is complementarity-determining-1; that stretch reads GYTFTSYY. The segment at 53-69 is framework-2; the sequence is MHWVRQAPGQGLEWMGI. Residues 70 to 77 form a complementarity-determining-2 region; sequence INPSGGST. The tract at residues 78–115 is framework-3; the sequence is SYAQKFQGRVTMTRDTSTSTVYMELSSLRSEDTAVYYC. Residues 116-117 are complementarity-determining-3; sequence AR.

In terms of assembly, immunoglobulins are composed of two identical heavy chains and two identical light chains; disulfide-linked.

The protein resides in the secreted. The protein localises to the cell membrane. Its function is as follows. V region of the variable domain of immunoglobulin heavy chains that participates in the antigen recognition. Immunoglobulins, also known as antibodies, are membrane-bound or secreted glycoproteins produced by B lymphocytes. In the recognition phase of humoral immunity, the membrane-bound immunoglobulins serve as receptors which, upon binding of a specific antigen, trigger the clonal expansion and differentiation of B lymphocytes into immunoglobulins-secreting plasma cells. Secreted immunoglobulins mediate the effector phase of humoral immunity, which results in the elimination of bound antigens. The antigen binding site is formed by the variable domain of one heavy chain, together with that of its associated light chain. Thus, each immunoglobulin has two antigen binding sites with remarkable affinity for a particular antigen. The variable domains are assembled by a process called V-(D)-J rearrangement and can then be subjected to somatic hypermutations which, after exposure to antigen and selection, allow affinity maturation for a particular antigen. In Homo sapiens (Human), this protein is Immunoglobulin heavy variable 1-46.